Consider the following 171-residue polypeptide: MTAILITGYRSFEIGIFDHKDPRVSIIKQAIRKDLIGYLENGVDWFIFTGNLGFEQWALEVANELKEEYPLQIATIFLFETHGDRWNEKNQEVLSQFRAVDFVKYYFPNYEQPTQFSQYYQFLLEKTEGAYVFYDTENETNLKYFLKKAKDMPHYQLLLLTFDRLNDMSQS.

The protein belongs to the UPF0398 family.

In Streptococcus pyogenes serotype M28 (strain MGAS6180), this protein is UPF0398 protein M28_Spy1394.